Consider the following 442-residue polypeptide: Lipoyl synthase, apicoplast (442 aa).

The first 23 residues, 1–23 (MRVLTPSLYIYAFFIFCVRFKCG), serve as a signal peptide directing secretion. The segment at 104–154 (LGEHQLKGKRKESATNVEKEKKEKEQQEERLPVPKVGNKMPEKKPDWFHVP) is disordered. Residues 114–135 (KESATNVEKEKKEKEQQEERLP) are compositionally biased toward basic and acidic residues. Residues C177, C182, C188, C203, C207, C210, and S418 each contribute to the [4Fe-4S] cluster site. Positions 189 to 407 (WNIGTATIML…KEEGMKMGFK (219 aa)) constitute a Radical SAM core domain.

The protein belongs to the radical SAM superfamily. Lipoyl synthase family. It depends on [4Fe-4S] cluster as a cofactor.

The protein resides in the plastid. The protein localises to the apicoplast. The catalysed reaction is [[Fe-S] cluster scaffold protein carrying a second [4Fe-4S](2+) cluster] + N(6)-octanoyl-L-lysyl-[protein] + 2 oxidized [2Fe-2S]-[ferredoxin] + 2 S-adenosyl-L-methionine + 4 H(+) = [[Fe-S] cluster scaffold protein] + N(6)-[(R)-dihydrolipoyl]-L-lysyl-[protein] + 4 Fe(3+) + 2 hydrogen sulfide + 2 5'-deoxyadenosine + 2 L-methionine + 2 reduced [2Fe-2S]-[ferredoxin]. Its pathway is protein modification; protein lipoylation via endogenous pathway; protein N(6)-(lipoyl)lysine from octanoyl-[acyl-carrier-protein]: step 2/2. Catalyzes the radical-mediated insertion of two sulfur atoms into the C-6 and C-8 positions of the octanoyl moiety bound to the lipoyl domains of lipoate-dependent enzymes, thereby converting the octanoylated domains into lipoylated derivatives. In Plasmodium knowlesi (strain H), this protein is Lipoyl synthase, apicoplast.